Here is an 83-residue protein sequence, read N- to C-terminus: Short neurotoxin VAN-29 (83 aa).

Residues 1-21 (MKTLLLTLVVVTIVCLDLGYT) form the signal peptide. Intrachain disulfides connect cysteine 24–cysteine 45, cysteine 38–cysteine 62, cysteine 64–cysteine 75, and cysteine 76–cysteine 81.

This sequence belongs to the three-finger toxin family. Short-chain subfamily. Type I alpha-neurotoxin sub-subfamily. In terms of tissue distribution, expressed by the venom gland.

It is found in the secreted. In terms of biological role, binds to muscle nicotinic acetylcholine receptor (nAChR) and inhibit acetylcholine from binding to the receptor, thereby impairing neuromuscular transmission. In Laticauda laticaudata (Blue-ringed sea krait), this protein is Short neurotoxin VAN-29.